Consider the following 345-residue polypeptide: MAEFWASPYGFALSMLLQGLAVIAFVMGSLIFMVYGDRKIWAAVQMRRGPNVVGPWGLLQTFADALKYIVKEIVIPAGADKFVYFLAPFLSMMLALFAFVVIPFDEGWVMANINVGILFIFAASSLEVYGVIMGGWASNSKYPFLASLRSAAQMISYEVSLGLIIIGIIISTGSMNLTAIVEAHGGDYGLLNWYWLPHLPMVVLFFVSALAECNRPPFDLVEAESELVAGFMTEYSSTPYLLFMAGEYIAMYLMCALLSLLFFGGWLSPVPFIADGWWWMVIKMWFWFYMFAMVKAIVPRYRYDQLMRIGWKVFLPLSLGWVVLVAILARYEILGGFWARFAVGG.

8 helical membrane passes run 15–35 (MLLQ…FMVY), 82–102 (FVYF…FVVI), 115–135 (VGIL…IMGG), 161–181 (LGLI…TAIV), 190–210 (LLNW…VSAL), 240–262 (YLLF…SLLF), 278–298 (WWMV…KAIV), and 309–329 (IGWK…AILA).

This sequence belongs to the complex I subunit 1 family. In terms of assembly, NDH-1 is composed of at least 14 different subunits, Nqo1 to Nqo14. The complex has a L-shaped structure, with the hydrophobic arm (subunits Nqo7, Nqo8, Nqo10 to Nqo14) embedded in the inner membrane and the hydrophilic peripheral arm (subunits Nqo1 to Nqo6, Nqo9) protruding into the bacterial cytoplasm. The hydrophilic domain contains all the redox centers.

It is found in the cell inner membrane. It carries out the reaction a quinone + NADH + 5 H(+)(in) = a quinol + NAD(+) + 4 H(+)(out). NDH-1 shuttles electrons from NADH, via FMN and iron-sulfur (Fe-S) centers, to quinones in the respiratory chain. The immediate electron acceptor for the enzyme in this species is believed to be ubiquinone. Couples the redox reaction to proton translocation (for every two electrons transferred, four hydrogen ions are translocated across the cytoplasmic membrane), and thus conserves the redox energy in a proton gradient. This Paracoccus denitrificans protein is NADH-quinone oxidoreductase subunit 8.